The primary structure comprises 253 residues: Type III pantothenate kinase (253 aa).

Residue Asp-6 to Val-13 coordinates ATP. Substrate is bound at residue Gly-107–Arg-110. Asp-109 acts as the Proton acceptor in catalysis. Asp-129 contributes to the K(+) binding site. Thr-132 is a binding site for ATP. A substrate-binding site is contributed by Thr-184.

Belongs to the type III pantothenate kinase family. Homodimer. It depends on NH4(+) as a cofactor. K(+) serves as cofactor.

Its subcellular location is the cytoplasm. It carries out the reaction (R)-pantothenate + ATP = (R)-4'-phosphopantothenate + ADP + H(+). Its pathway is cofactor biosynthesis; coenzyme A biosynthesis; CoA from (R)-pantothenate: step 1/5. In terms of biological role, catalyzes the phosphorylation of pantothenate (Pan), the first step in CoA biosynthesis. In Exiguobacterium sibiricum (strain DSM 17290 / CCUG 55495 / CIP 109462 / JCM 13490 / 255-15), this protein is Type III pantothenate kinase.